Consider the following 249-residue polypeptide: Acetylglutamate kinase (249 aa).

Substrate is bound by residues 38–39 (GG), Arg60, and Asn147.

Belongs to the acetylglutamate kinase family. ArgB subfamily.

The protein resides in the cytoplasm. The catalysed reaction is N-acetyl-L-glutamate + ATP = N-acetyl-L-glutamyl 5-phosphate + ADP. Its pathway is amino-acid biosynthesis; L-arginine biosynthesis; N(2)-acetyl-L-ornithine from L-glutamate: step 2/4. In terms of biological role, catalyzes the ATP-dependent phosphorylation of N-acetyl-L-glutamate. The chain is Acetylglutamate kinase from Deinococcus geothermalis (strain DSM 11300 / CIP 105573 / AG-3a).